The chain runs to 656 residues: MTGGSSSRRRRAEERSSAAGTERNSRREAVGGMGAGPALAALLLAGSVLSATLLAPGRRAEPDLDEKRNVELKMDQALLLIHNELLGTSLTVYWKSDDCYQCTFQPLANVSHGGKPAKPSVAPVSVSTQHGSILQVNSTSEERAACRLEYKFGEFGNYSLLVQHASSGANKIACDIIVNENPVDSNLPVSIAFLVGLALIVAVSLLRLLLSLDDVNNWISKTIASRETDRLINSELGSPSRADPLSADYQPETRRSSANRLRCVDTFRGLALVLMVFVNYGGGKYWYFKHSSWNGLTVADLVFPWFVFIMGTSIFLSMTSILQRGCSKLKLLGKIVWRSFLLICIGVIIVNPNYCLGPLSWDKVRIPGVLQRLGVTYFVVAVLEFFFWKPVPDSCTLESSCFSLRDITSSWPQWLTILTLESIWLALTFFLPVPGCPTGYLGPGGIGDLGKYPHCTGGAAGYIDRLLLGDNHLYQHPSSTVLYHTEVAYDPEGVLGTINSIVMAFLGVQAGKILVYYKDQTKAILTRFAAWCCILGLISIVLTKVSANEGFIPINKNLWSISYVTTLSCFAFFILLILYPVVDVKGLWTGTPFFYPGMNSILVYVGHEVLENYFPFQWKLADEQSHKEHLIQNIVATALWVLIAYVLYKKKLFWKI.

Positions 1-31 (MTGGSSSRRRRAEERSSAAGTERNSRREAVG) are disordered. Residues 1 to 185 (MTGGSSSRRR…IIVNENPVDS (185 aa)) are Lumenal, vesicle-facing. Asparagine 137 and asparagine 157 each carry an N-linked (GlcNAc...) asparagine glycan. The cysteines at positions 146 and 455 are disulfide-linked. The chain crosses the membrane as a helical span at residues 186-206 (NLPVSIAFLVGLALIVAVSLL). Topologically, residues 207-268 (RLLLSLDDVN…NRLRCVDTFR (62 aa)) are cytoplasmic. The segment at 234 to 253 (SELGSPSRADPLSADYQPET) is disordered. A phosphoserine mark is found at serine 238 and serine 240. Tyrosine 249 carries the phosphotyrosine modification. Residues 269–289 (GLALVLMVFVNYGGGKYWYFK) traverse the membrane as a helical segment. Histidine 290 is a catalytic residue. Over 290 to 295 (HSSWNG) the chain is Lumenal, vesicle. A helical membrane pass occupies residues 296–316 (LTVADLVFPWFVFIMGTSIFL). The Cytoplasmic portion of the chain corresponds to 317 to 338 (SMTSILQRGCSKLKLLGKIVWR). Residues 339 to 359 (SFLLICIGVIIVNPNYCLGPL) form a helical membrane-spanning segment. Topologically, residues 360–367 (SWDKVRIP) are lumenal, vesicle. Residues 368 to 388 (GVLQRLGVTYFVVAVLEFFFW) form a helical membrane-spanning segment. At 389 to 413 (KPVPDSCTLESSCFSLRDITSSWPQ) the chain is on the cytoplasmic side. The chain crosses the membrane as a helical span at residues 414-434 (WLTILTLESIWLALTFFLPVP). Over 435-493 (GCPTGYLGPGGIGDLGKYPHCTGGAAGYIDRLLLGDNHLYQHPSSTVLYHTEVAYDPEG) the chain is Lumenal, vesicle. Residues 494–514 (VLGTINSIVMAFLGVQAGKIL) form a helical membrane-spanning segment. At 515–522 (VYYKDQTK) the chain is on the cytoplasmic side. The helical transmembrane segment at 523–543 (AILTRFAAWCCILGLISIVLT) threads the bilayer. Topologically, residues 544 to 557 (KVSANEGFIPINKN) are lumenal, vesicle. A helical transmembrane segment spans residues 558–578 (LWSISYVTTLSCFAFFILLIL). The Cytoplasmic portion of the chain corresponds to 579–585 (YPVVDVK). Residues 586-606 (GLWTGTPFFYPGMNSILVYVG) form a helical membrane-spanning segment. Residues 607-627 (HEVLENYFPFQWKLADEQSHK) are Lumenal, vesicle-facing. Residues 628-648 (EHLIQNIVATALWVLIAYVLY) form a helical membrane-spanning segment. The interval 641–656 (VLIAYVLYKKKLFWKI) is lysosomal targeting region. Residues 649–656 (KKKLFWKI) lie on the Cytoplasmic side of the membrane.

Homooligomer. Homooligomerization is necessary for enzyme activity. In terms of processing, undergoes intralysosomal proteolytic cleavage; occurs within the end of the first and/or the beginning of the second luminal domain and is essential for the activation of the enzyme. Glycosylated. Expressed in the retina.

Its subcellular location is the lysosome membrane. It catalyses the reaction alpha-D-glucosaminyl-[heparan sulfate](n) + acetyl-CoA = N-acetyl-alpha-D-glucosaminyl-[heparan sulfate](n) + CoA + H(+). Its function is as follows. Lysosomal acetyltransferase that acetylates the non-reducing terminal alpha-glucosamine residue of intralysosomal heparin or heparan sulfate, converting it into a substrate for luminal alpha-N-acetyl glucosaminidase. This is Heparan-alpha-glucosaminide N-acetyltransferase (Hgsnat) from Mus musculus (Mouse).